We begin with the raw amino-acid sequence, 400 residues long: Exodeoxyribonuclease 7 large subunit (400 aa).

Belongs to the XseA family. In terms of assembly, heterooligomer composed of large and small subunits.

It is found in the cytoplasm. It catalyses the reaction Exonucleolytic cleavage in either 5'- to 3'- or 3'- to 5'-direction to yield nucleoside 5'-phosphates.. Its function is as follows. Bidirectionally degrades single-stranded DNA into large acid-insoluble oligonucleotides, which are then degraded further into small acid-soluble oligonucleotides. The protein is Exodeoxyribonuclease 7 large subunit of Clostridium perfringens (strain 13 / Type A).